A 237-amino-acid chain; its full sequence is Sugar fermentation stimulation protein homolog (237 aa).

It belongs to the SfsA family.

This chain is Sugar fermentation stimulation protein homolog, found in Azorhizobium caulinodans (strain ATCC 43989 / DSM 5975 / JCM 20966 / LMG 6465 / NBRC 14845 / NCIMB 13405 / ORS 571).